The sequence spans 437 residues: UDP-N-acetylmuramate--L-alanine ligase (437 aa).

Residue 108–114 (GAHGKTS) participates in ATP binding.

Belongs to the MurCDEF family.

It is found in the cytoplasm. The catalysed reaction is UDP-N-acetyl-alpha-D-muramate + L-alanine + ATP = UDP-N-acetyl-alpha-D-muramoyl-L-alanine + ADP + phosphate + H(+). Its pathway is cell wall biogenesis; peptidoglycan biosynthesis. In terms of biological role, cell wall formation. This Staphylococcus saprophyticus subsp. saprophyticus (strain ATCC 15305 / DSM 20229 / NCIMB 8711 / NCTC 7292 / S-41) protein is UDP-N-acetylmuramate--L-alanine ligase.